The chain runs to 124 residues: Small ribosomal subunit protein uS12 (124 aa).

Aspartate 89 carries the post-translational modification 3-methylthioaspartic acid. A disordered region spans residues 102-124; sequence LDTSGVNNRKHGRSKYGTKRPKS. Over residues 109-124 the composition is skewed to basic residues; the sequence is NRKHGRSKYGTKRPKS.

It belongs to the universal ribosomal protein uS12 family. Part of the 30S ribosomal subunit. Contacts proteins S8 and S17. May interact with IF1 in the 30S initiation complex.

Its function is as follows. With S4 and S5 plays an important role in translational accuracy. Functionally, interacts with and stabilizes bases of the 16S rRNA that are involved in tRNA selection in the A site and with the mRNA backbone. Located at the interface of the 30S and 50S subunits, it traverses the body of the 30S subunit contacting proteins on the other side and probably holding the rRNA structure together. The combined cluster of proteins S8, S12 and S17 appears to hold together the shoulder and platform of the 30S subunit. This Francisella tularensis subsp. tularensis (strain FSC 198) protein is Small ribosomal subunit protein uS12.